Here is a 185-residue protein sequence, read N- to C-terminus: 16S rRNA aminocarboxypropyltransferase (185 aa).

Residues T19, I69, L93, Y108, and T112 each contribute to the S-adenosyl-L-methionine site.

This sequence belongs to the TDD superfamily. TSR3 family.

Its subcellular location is the cytoplasm. It catalyses the reaction an N(1)-methylpseudouridine in rRNA + S-adenosyl-L-methionine = N(1)-methyl-N(3)-[(3S)-3-amino-3-carboxypropyl]pseudouridine in rRNA + S-methyl-5'-thioadenosine + H(+). In terms of biological role, aminocarboxypropyltransferase that catalyzes the aminocarboxypropyl transfer on pseudouridine corresponding to position 914 in M.jannaschii 16S rRNA. It constitutes the last step in biosynthesis of the hypermodified N1-methyl-N3-(3-amino-3-carboxypropyl) pseudouridine (m1acp3-Psi). The chain is 16S rRNA aminocarboxypropyltransferase from Vulcanisaeta distributa (strain DSM 14429 / JCM 11212 / NBRC 100878 / IC-017).